A 770-amino-acid polypeptide reads, in one-letter code: MLSNRAFGETIEEYEVQHLLGKGGFASVYKARCLHTHQDVAIKMIDKKLIQGTGLTNRVRQEVEIHSRLKHPSVLQLYTFFQDANYVYLVLELAHNGELHRYMNHIGRPFTEAEAASILRQVVAGLLYLHSHNIMHRDISLSNLLLSKEMHVKIADFGLATQLKRPDERHVTMCGTPNYISPEVVSRTSHGLPADVWSVGCMLYTLLVGRPPFETDAVQTTLNKVVLSEYIMPTHLSFEAQDLINKLLKKVPHERIALEHVLRHPFLTKRLENSSNGVYSTPGALNVFSQSLESGDSGIITFASSDSRNSQRLRSVENTAPLQGLPQIQEEYMQDKYRPTYDQPGLFKQPSSTRMEHNWLTTEKDTPFRMDVPMKEKPAPLKEERISVPPLNTKRLLPTRYKTKNAIMSILRNGEVVLEFLKYRPKFNEDRVTDICRISDDGRRIIIYQPDPGRGLPIRDHPPELQIPNEDCVYNYDSLPSKHWKKYVYADRFVGLVKSKTPKVTYFSALGKCQLMETMTDFEIRFYSGAKLTKSPSEGLKVHNANGMLLSDHVGSEARSMIDHGNECFTHCVSISNALEMAQTKDNSCFPVTIGRRPVTEVQPSQRLDGLRDTTNFAYSTPKSNQGSINFSVSTISSIRNTTDFGSNSSRTNMRASQQNIPIKRINLPDIGVATELSHGVVQVQFYDGSVVSIIPDIQGGGVTYTQSNGISTHFGKDDDLPFTVREKLSQLPHIQLKLKTAPLLSNSRKIEFNAMTPKTTTPCYNRMLL.

One can recognise a Protein kinase domain in the interval 14–267 (YEVQHLLGKG…LEHVLRHPFL (254 aa)). ATP is bound by residues 20 to 28 (LGKGGFASV) and lysine 43. The active-site Proton acceptor is aspartate 138. One can recognise a Cryptic POLO box 1 (CPB1) domain in the interval 383-500 (EERISVPPLN…DRFVGLVKSK (118 aa)). Residues 501–604 (TPKVTYFSAL…GRRPVTEVQP (104 aa)) enclose the Cryptic POLO box 2 (CPB2) domain. Residues 662–741 (PIKRINLPDI…LPHIQLKLKT (80 aa)) form the POLO box domain.

The protein belongs to the protein kinase superfamily. Ser/Thr protein kinase family. CDC5/Polo subfamily. Homodimer. Post-translationally, ubiquitinated by the SCF(Slimb) ubiquitin ligase complex; leading to its degradation by the proteasome during interphase and regulating centriole number and ensuring the block to centriole reduplication.

The protein resides in the cytoplasm. The protein localises to the cytoskeleton. It is found in the microtubule organizing center. It localises to the centrosome. Its subcellular location is the centriole. The enzyme catalyses L-seryl-[protein] + ATP = O-phospho-L-seryl-[protein] + ADP + H(+). It carries out the reaction L-threonyl-[protein] + ATP = O-phospho-L-threonyl-[protein] + ADP + H(+). Functionally, serine/threonine-protein kinase that plays a central role in centriole duplication. Able to trigger procentriole formation on the surface of the mother centriole cylinder, using mother centriole as a platform, leading to the recruitment of centriole biogenesis proteins such as sas-6. When overexpressed, it is able to induce centrosome amplification through the simultaneous generation of multiple procentrioles adjoining each parental centriole during S phase. Centrosome amplification following overexpression can initiate tumorigenesis, highlighting the importance of centrosome regulation in cancers. In Drosophila ananassae (Fruit fly), this protein is Serine/threonine-protein kinase PLK4 (SAK).